The following is a 184-amino-acid chain: ATP synthase subunit b, chloroplastic (184 aa).

Residues 27–49 (LATNPINLSVVLGVLIFFGKGVL) traverse the membrane as a helical segment.

Belongs to the ATPase B chain family. As to quaternary structure, F-type ATPases have 2 components, F(1) - the catalytic core - and F(0) - the membrane proton channel. F(1) has five subunits: alpha(3), beta(3), gamma(1), delta(1), epsilon(1). F(0) has four main subunits: a(1), b(1), b'(1) and c(10-14). The alpha and beta chains form an alternating ring which encloses part of the gamma chain. F(1) is attached to F(0) by a central stalk formed by the gamma and epsilon chains, while a peripheral stalk is formed by the delta, b and b' chains.

Its subcellular location is the plastid. It localises to the chloroplast thylakoid membrane. Its function is as follows. F(1)F(0) ATP synthase produces ATP from ADP in the presence of a proton or sodium gradient. F-type ATPases consist of two structural domains, F(1) containing the extramembraneous catalytic core and F(0) containing the membrane proton channel, linked together by a central stalk and a peripheral stalk. During catalysis, ATP synthesis in the catalytic domain of F(1) is coupled via a rotary mechanism of the central stalk subunits to proton translocation. Functionally, component of the F(0) channel, it forms part of the peripheral stalk, linking F(1) to F(0). This Populus alba (White poplar) protein is ATP synthase subunit b, chloroplastic.